Consider the following 194-residue polypeptide: Peptidyl-tRNA hydrolase (194 aa).

Tyrosine 16 provides a ligand contact to tRNA. Histidine 21 (proton acceptor) is an active-site residue. The tRNA site is built by phenylalanine 67, asparagine 69, and asparagine 115.

The protein belongs to the PTH family. As to quaternary structure, monomer.

It is found in the cytoplasm. It carries out the reaction an N-acyl-L-alpha-aminoacyl-tRNA + H2O = an N-acyl-L-amino acid + a tRNA + H(+). Its function is as follows. Hydrolyzes ribosome-free peptidyl-tRNAs (with 1 or more amino acids incorporated), which drop off the ribosome during protein synthesis, or as a result of ribosome stalling. Functionally, catalyzes the release of premature peptidyl moieties from peptidyl-tRNA molecules trapped in stalled 50S ribosomal subunits, and thus maintains levels of free tRNAs and 50S ribosomes. This Escherichia coli O17:K52:H18 (strain UMN026 / ExPEC) protein is Peptidyl-tRNA hydrolase.